The primary structure comprises 119 residues: Beta-2-microglobulin (119 aa).

Residues 1-20 form the signal peptide; sequence MARSVVVSLFVLLALAGLEA. In terms of domain architecture, Ig-like C1-type spans 25 to 114; that stretch reads PKIQVYSRHP…VTFQTPKTVK (90 aa).

It belongs to the beta-2-microglobulin family. Heterodimer of an alpha chain and a beta chain. Beta-2-microglobulin is the beta-chain of major histocompatibility complex class I molecules.

It localises to the secreted. Its function is as follows. Component of the class I major histocompatibility complex (MHC). Involved in the presentation of peptide antigens to the immune system. This is Beta-2-microglobulin (B2M) from Brachyteles arachnoides (Southern muriqui).